The chain runs to 244 residues: tRNA (guanine-N(1)-)-methyltransferase (244 aa).

S-adenosyl-L-methionine is bound by residues Gly-113 and 133–138; that span reads IGDFVL.

The protein belongs to the RNA methyltransferase TrmD family. Homodimer.

The protein localises to the cytoplasm. It catalyses the reaction guanosine(37) in tRNA + S-adenosyl-L-methionine = N(1)-methylguanosine(37) in tRNA + S-adenosyl-L-homocysteine + H(+). Its function is as follows. Specifically methylates guanosine-37 in various tRNAs. This is tRNA (guanine-N(1)-)-methyltransferase from Bacillus pumilus (strain SAFR-032).